A 217-amino-acid chain; its full sequence is 3,4-dihydroxy-2-butanone 4-phosphate synthase (217 aa).

Residues 37–38, Asp-42, 150–154, and Glu-174 each bind D-ribulose 5-phosphate; these read RE and RQGHT. Glu-38 contributes to the Mg(2+) binding site. Position 153 (His-153) interacts with Mg(2+).

This sequence belongs to the DHBP synthase family. In terms of assembly, homodimer. The cofactor is Mg(2+). It depends on Mn(2+) as a cofactor.

It catalyses the reaction D-ribulose 5-phosphate = (2S)-2-hydroxy-3-oxobutyl phosphate + formate + H(+). It participates in cofactor biosynthesis; riboflavin biosynthesis; 2-hydroxy-3-oxobutyl phosphate from D-ribulose 5-phosphate: step 1/1. Catalyzes the conversion of D-ribulose 5-phosphate to formate and 3,4-dihydroxy-2-butanone 4-phosphate. The protein is 3,4-dihydroxy-2-butanone 4-phosphate synthase of Desulforamulus reducens (strain ATCC BAA-1160 / DSM 100696 / MI-1) (Desulfotomaculum reducens).